A 494-amino-acid chain; its full sequence is Gabija protein GajB (494 aa).

The UvrD-like helicase ATP-binding domain occupies 1 to 229 (MSREQIIKDG…YHLTSNFRCC (229 aa)). 17-24 (AGAGSGKT) is a binding site for ATP.

The protein belongs to the helicase family. Homodimer. Interacts with GajA; 2 GajB dimers dock at opposite sides of the GajA complex to form a 4:4 GajA-GajB assembly (GajAB). GajAB interacts with Bacillus phage Phi3T Gad1 protein; this interaction forms a 4:4:8 GajAB-Gad1 complex and leads to GajAB inhibition.

Its function is as follows. Component of antiviral defense system Gabija type I, composed of GajA and GajB. Expression of Gabija type I in B.subtilis (strain BEST7003) confers resistance to phages phi105, phi29, rho14, SpBeta and SBSphiC. Expression of Gabija type I in E.coli B (strain ATCC 11303) confers resistance to phage T7. May be a helicase or contribute to GajA activation. The polypeptide is Gabija protein GajB (Bacillus cereus (strain VD045)).